We begin with the raw amino-acid sequence, 864 residues long: Paramyosin (864 aa).

The interval 1–30 (MSSLYRDLDSDVSSTRIVRHSYNVYRGSSP) is nonhelical region. Positions 31 to 853 (SSQNRLESRI…QTVRRSRSMS (823 aa)) form a coiled coil. The nonhelical region stretch occupies residues 854–864 (VSREVTRVVRV).

The protein belongs to the paramyosin family. As to quaternary structure, homodimer. Post-translationally, phosphorylated. In terms of tissue distribution, most abundantly expressed in muscle tissues from byssus retractor and adductor muscles. Low expression in foot, gill, inner mantle and outer mantle.

It localises to the cytoplasm. The protein localises to the myofibril. Paramyosin is a major structural component of many thick filaments isolated from invertebrate muscles. In Mytilus galloprovincialis (Mediterranean mussel), this protein is Paramyosin.